The primary structure comprises 510 residues: NAD(P)H-quinone oxidoreductase subunit 2 B, chloroplastic (510 aa).

13 helical membrane-spanning segments follow: residues 26-46 (LFDGSFIFPEGILIFGLILLL), 57-77 (IPWFYFISSISLVMSITALLF), 99-119 (IFQFLILLCSTLCIPLSVEYI), 124-144 (MAITEFLLFVLTATLGGMFLC), 149-169 (LITIFVAPECFSLCSYLLSGY), 183-203 (YLLMGGASSSILVHGFSWLYG), 227-247 (PGISIALIFITVGIGFKLSPA), 295-315 (WHPLLEILAILSMILGNLIAI), 323-342 (MLAYSSIGQIGYVIIGIIVG), 354-374 (YMLFYISMNLGTFACIVLFGL), 395-415 (ALSLALCLLSLGGLPPLAGFF), 418-438 (LHLFWCGWQAGLYFLVSIGLF), and 484-504 (MIVCVIASTIPGISMNPIIAI).

Belongs to the complex I subunit 2 family. As to quaternary structure, NDH is composed of at least 16 different subunits, 5 of which are encoded in the nucleus.

The protein localises to the plastid. It localises to the chloroplast thylakoid membrane. It carries out the reaction a plastoquinone + NADH + (n+1) H(+)(in) = a plastoquinol + NAD(+) + n H(+)(out). It catalyses the reaction a plastoquinone + NADPH + (n+1) H(+)(in) = a plastoquinol + NADP(+) + n H(+)(out). Functionally, NDH shuttles electrons from NAD(P)H:plastoquinone, via FMN and iron-sulfur (Fe-S) centers, to quinones in the photosynthetic chain and possibly in a chloroplast respiratory chain. The immediate electron acceptor for the enzyme in this species is believed to be plastoquinone. Couples the redox reaction to proton translocation, and thus conserves the redox energy in a proton gradient. The polypeptide is NAD(P)H-quinone oxidoreductase subunit 2 B, chloroplastic (Oenothera argillicola (Appalachian evening primrose)).